The sequence spans 84 residues: MKTLLLTLVVVTIVCLDLGYTRKCLNTPLPLIYKTCPIGQDRCIKMTIKKLPSKYDVIRGCIDICPKSSADVEVLCCDTNKCNK.

The signal sequence occupies residues 1–21 (MKTLLLTLVVVTIVCLDLGYT). 4 disulfides stabilise this stretch: C24–C43, C36–C61, C65–C76, and C77–C82.

It belongs to the three-finger toxin family. Short-chain subfamily. Aminergic toxin sub-subfamily. As to expression, expressed by the venom gland.

Its subcellular location is the secreted. In terms of biological role, acts as a beta-blocker by binding to beta-1 and beta-2 adrenergic receptors (ADRB1 and ADRB2). It dose-dependently decreases the heart rate (bradycardia), whereas conventional cardiotoxins increases it. At 100 mg/kg, intraperitoneal injection into mice provokes labored breathing, impaired locomotion, lack of response to external stimuli, and death (after 30 minutes). The sequence is that of Beta-cardiotoxin CTX9 from Ophiophagus hannah (King cobra).